A 94-amino-acid polypeptide reads, in one-letter code: Co-chaperonin GroES (94 aa).

Belongs to the GroES chaperonin family. Heptamer of 7 subunits arranged in a ring. Interacts with the chaperonin GroEL.

The protein localises to the cytoplasm. Together with the chaperonin GroEL, plays an essential role in assisting protein folding. The GroEL-GroES system forms a nano-cage that allows encapsulation of the non-native substrate proteins and provides a physical environment optimized to promote and accelerate protein folding. GroES binds to the apical surface of the GroEL ring, thereby capping the opening of the GroEL channel. This Streptococcus pneumoniae (strain ATCC BAA-255 / R6) protein is Co-chaperonin GroES.